The primary structure comprises 772 residues: NAD(P)H-quinone oxidoreductase subunit 5, chloroplastic (772 aa).

Transmembrane regions (helical) follow at residues I8 to F28, I39 to F59, F87 to V107, G120 to L140, I147 to S167, G185 to I205, N219 to A239, T258 to A278, M291 to A311, G395 to W415, W425 to Y445, L574 to F594, I631 to V651, W710 to M730, and I738 to I758.

Belongs to the complex I subunit 5 family. NDH is composed of at least 16 different subunits, 5 of which are encoded in the nucleus.

Its subcellular location is the plastid. The protein localises to the chloroplast thylakoid membrane. The enzyme catalyses a plastoquinone + NADH + (n+1) H(+)(in) = a plastoquinol + NAD(+) + n H(+)(out). It carries out the reaction a plastoquinone + NADPH + (n+1) H(+)(in) = a plastoquinol + NADP(+) + n H(+)(out). Functionally, NDH shuttles electrons from NAD(P)H:plastoquinone, via FMN and iron-sulfur (Fe-S) centers, to quinones in the photosynthetic chain and possibly in a chloroplast respiratory chain. The immediate electron acceptor for the enzyme in this species is believed to be plastoquinone. Couples the redox reaction to proton translocation, and thus conserves the redox energy in a proton gradient. The sequence is that of NAD(P)H-quinone oxidoreductase subunit 5, chloroplastic (ndhF) from Angiopteris evecta (Mule's foot fern).